The following is a 420-amino-acid chain: Exodeoxyribonuclease 7 large subunit (420 aa).

Belongs to the XseA family. Heterooligomer composed of large and small subunits.

It localises to the cytoplasm. The enzyme catalyses Exonucleolytic cleavage in either 5'- to 3'- or 3'- to 5'-direction to yield nucleoside 5'-phosphates.. Functionally, bidirectionally degrades single-stranded DNA into large acid-insoluble oligonucleotides, which are then degraded further into small acid-soluble oligonucleotides. The sequence is that of Exodeoxyribonuclease 7 large subunit from Helicobacter pylori (strain J99 / ATCC 700824) (Campylobacter pylori J99).